We begin with the raw amino-acid sequence, 461 residues long: Glutamyl-tRNA reductase (461 aa).

Substrate-binding positions include 50 to 53 (TCNR), Ser111, 116 to 118 (EPQ), and Gln122. Cys51 functions as the Nucleophile in the catalytic mechanism. 191–196 (GAGEMA) is a binding site for NADP(+).

The protein belongs to the glutamyl-tRNA reductase family. Homodimer.

It catalyses the reaction (S)-4-amino-5-oxopentanoate + tRNA(Glu) + NADP(+) = L-glutamyl-tRNA(Glu) + NADPH + H(+). The protein operates within porphyrin-containing compound metabolism; protoporphyrin-IX biosynthesis; 5-aminolevulinate from L-glutamyl-tRNA(Glu): step 1/2. Its function is as follows. Catalyzes the NADPH-dependent reduction of glutamyl-tRNA(Glu) to glutamate 1-semialdehyde (GSA). The chain is Glutamyl-tRNA reductase from Syntrophobacter fumaroxidans (strain DSM 10017 / MPOB).